A 311-amino-acid polypeptide reads, in one-letter code: MIKKEIIILCGPTASGKSCLGHELAKAYDCEIINIDSMQVYKEIPIITASPIQIYNTDIHYHLYNFLSITEDFSVIKYLKLAAKKIKEITVRGKLPILIGGTGLYINLLVFGYNNIPDISEDLRVQVRNLHDKIGNIELWNQLKKLDPIASTKINHCDTQRLIRAYEVFMHTGKSIFSFHTAPKERILSDFNFKIIFLNPERKFLYKTCDERLDKIFKDKAIDEIALLKKQFTPEEYAHLKAVGIKEILAYLDGNLTLDAALNVAQMRTRQYAKRQVTWFTHQIQDKTILEYSTQEEFAQILRHLLFILRS.

11–18 serves as a coordination point for ATP; that stretch reads GPTASGKS. 13-18 provides a ligand contact to substrate; sequence TASGKS. Interaction with substrate tRNA regions lie at residues 36–39 and 160–164; these read DSMQ and QRLIR.

The protein belongs to the IPP transferase family. In terms of assembly, monomer. Mg(2+) is required as a cofactor.

The enzyme catalyses adenosine(37) in tRNA + dimethylallyl diphosphate = N(6)-dimethylallyladenosine(37) in tRNA + diphosphate. Its function is as follows. Catalyzes the transfer of a dimethylallyl group onto the adenine at position 37 in tRNAs that read codons beginning with uridine, leading to the formation of N6-(dimethylallyl)adenosine (i(6)A). The polypeptide is tRNA dimethylallyltransferase (Rickettsia prowazekii (strain Madrid E)).